We begin with the raw amino-acid sequence, 121 residues long: Putative membrane protein insertion efficiency factor (121 aa).

This sequence belongs to the UPF0161 family.

The protein resides in the cell membrane. Could be involved in insertion of integral membrane proteins into the membrane. This is Putative membrane protein insertion efficiency factor from Rhodococcus opacus (strain B4).